Consider the following 820-residue polypeptide: Phospholipase D alpha 3 (820 aa).

Residues 1–133 (MTEQLLLHGT…ITGQPIDRWL (133 aa)) form the C2 domain. Asp194 serves as a coordination point for Ca(2+). Residues 334–371 (TMFTHHQKTIVVDSEVDGSLTKRRIVSFLGGIDLCDGR) form the PLD phosphodiesterase 1 domain. Catalysis depends on residues His339, Lys341, and Asp346. His339 lines the a 1,2-diacyl-sn-glycero-3-phosphate pocket. 2 residues coordinate Ca(2+): His377 and His411. 2 residues coordinate a 1,2-diacyl-sn-glycero-3-phosphate: Gln528 and His667. Residues 662-689 (FMIYVHSKMMIVDDEYIIIGSANINQRS) enclose the PLD phosphodiesterase 2 domain. Active-site residues include His667, Lys669, and Asp674. A Ca(2+)-binding site is contributed by Glu730.

It belongs to the phospholipase D family. C2-PLD subfamily. Ca(2+) is required as a cofactor. As to expression, expressed in buds, flowers, siliques, stems, old leaves and roots. Expressed in the sieve elements.

It localises to the cytoplasm. The protein localises to the membrane. It carries out the reaction a 1,2-diacyl-sn-glycero-3-phosphocholine + H2O = a 1,2-diacyl-sn-glycero-3-phosphate + choline + H(+). Its function is as follows. Hydrolyzes glycerol-phospholipids at the terminal phosphodiesteric bond to generate phosphatidic acids (PA). Active with phosphatidylcholine (PC), phosphatidylethanolamine (PE), phosphatidylglycerol (PG), and phosphatidylserine (PS) as substrates. No activity toward phosphatidylinositol (PI) or PIP2. Positively mediates plant responses to hyperosmotic stresses and promotes root growth, flowering, and stress avoidance. Not involved in the abscisic acid regulation of stomatal movement and transpirational water loss. This chain is Phospholipase D alpha 3, found in Arabidopsis thaliana (Mouse-ear cress).